Consider the following 208-residue polypeptide: Ribosomal RNA large subunit methyltransferase E (208 aa).

S-adenosyl-L-methionine is bound by residues G61, W63, D81, D97, and D122. Catalysis depends on K162, which acts as the Proton acceptor.

The protein belongs to the class I-like SAM-binding methyltransferase superfamily. RNA methyltransferase RlmE family.

The protein localises to the cytoplasm. The enzyme catalyses uridine(2552) in 23S rRNA + S-adenosyl-L-methionine = 2'-O-methyluridine(2552) in 23S rRNA + S-adenosyl-L-homocysteine + H(+). Specifically methylates the uridine in position 2552 of 23S rRNA at the 2'-O position of the ribose in the fully assembled 50S ribosomal subunit. The protein is Ribosomal RNA large subunit methyltransferase E of Pseudomonas entomophila (strain L48).